The chain runs to 109 residues: Aquaporin-2 (109 aa).

The Cytoplasmic segment spans residues 1–6; that stretch reads SVAFSR. The chain crosses the membrane as a helical span at residues 7–27; the sequence is AVLAEFLATLIFVFFGLGSAL. The Extracellular portion of the chain corresponds to 28-35; the sequence is SWPQALPS. The helical transmembrane segment at 36–54 threads the bilayer; it reads VLQIALAFGLAIGTLVQAL. At 55-59 the chain is on the cytoplasmic side; the sequence is GHVSG. Positions 60–69 form an intramembrane region, discontinuously helical; it reads AHINPAVTVA. Residues 63-65 carry the NPA 1 motif; sequence NPA. The Cytoplasmic portion of the chain corresponds to 70–80; that stretch reads CLVGCHVSFLR. The chain crosses the membrane as a helical span at residues 81–102; the sequence is AAFYVAAQLLGAVAGAAILHEI. At 103-109 the chain is on the extracellular side; that stretch reads TPPDVRG.

The protein belongs to the MIP/aquaporin (TC 1.A.8) family. Homotetramer. Serine phosphorylation is necessary and sufficient for expression at the apical membrane. Endocytosis is not phosphorylation-dependent. Post-translationally, N-glycosylated.

Its subcellular location is the apical cell membrane. It is found in the basolateral cell membrane. The protein localises to the cell membrane. It localises to the cytoplasmic vesicle membrane. The protein resides in the golgi apparatus. Its subcellular location is the trans-Golgi network membrane. The enzyme catalyses H2O(in) = H2O(out). The catalysed reaction is glycerol(in) = glycerol(out). Its function is as follows. Forms a water-specific channel that provides the plasma membranes of renal collecting duct with high permeability to water, thereby permitting water to move in the direction of an osmotic gradient. Plays an essential role in renal water homeostasis. Could also be permeable to glycerol. In Dasypus novemcinctus (Nine-banded armadillo), this protein is Aquaporin-2.